Here is a 355-residue protein sequence, read N- to C-terminus: Plasmodial-specific protein LAV1-2 (355 aa).

EF-hand domains follow at residues Glu151–Thr186 and Asn217–Asp252. Ca(2+) is bound by residues Asp230, Asn232, Asn234, Thr236, Glu241, Asp265, Asp267, Ser269, Asp271, Glu276, Asp295, Asp297, Ser299, Gln301, Glu306, Asp332, Asp334, Ser336, Ser338, and Glu343. 2 consecutive EF-hand domains span residues Leu282 to Pro317 and Ser319 to Asp354.

The polypeptide is Plasmodial-specific protein LAV1-2 (Physarum polycephalum (Slime mold)).